Consider the following 37-residue polypeptide: Large ribosomal subunit protein bL36A (37 aa).

The protein belongs to the bacterial ribosomal protein bL36 family.

This chain is Large ribosomal subunit protein bL36A, found in Clavibacter sepedonicus (Clavibacter michiganensis subsp. sepedonicus).